The following is a 355-amino-acid chain: Green-sensitive opsin (355 aa).

The Extracellular portion of the chain corresponds to 1 to 36; it reads MNGTEGINFYVPMSNKTGVVRSPFEYPQYYLAEPWK. 2 N-linked (GlcNAc...) asparagine glycosylation sites follow: Asn-2 and Asn-15. A helical transmembrane segment spans residues 37-61; that stretch reads YRLVCCYIFFLISTGLPINLLTLLV. The Cytoplasmic segment spans residues 62–73; that stretch reads TFKHKKLRQPLN. A helical transmembrane segment spans residues 74–99; sequence YILVNLAVADLFMACFGFTVTFYTAW. Residues 100–113 lie on the Extracellular side of the membrane; that stretch reads NGYFVFGPVGCAVE. An intrachain disulfide couples Cys-110 to Cys-187. The chain crosses the membrane as a helical span at residues 114–133; the sequence is GFFATLGGQVALWSLVVLAI. Residues 134 to 152 are Cytoplasmic-facing; it reads ERYIVVCKPMGNFRFSATH. The helical transmembrane segment at 153 to 176 threads the bilayer; sequence AMMGIAFTWVMAFSCAAPPLFGWS. The Extracellular portion of the chain corresponds to 177-202; that stretch reads RYMPEGMQCSCGPDYYTHNPDYHNES. The helical transmembrane segment at 203–230 threads the bilayer; that stretch reads YVLYMFVIHFIIPVVVIFFSYGRLICKV. At 231–252 the chain is on the cytoplasmic side; that stretch reads REAAAQQQESATTQKAEKEVTR. A helical membrane pass occupies residues 253 to 276; the sequence is MVILMVLGFMLAWTPYAVVAFWIF. Over 277–284 the chain is Extracellular; that stretch reads TNKGADFT. A helical membrane pass occupies residues 285-309; sequence ATLMAVPAFFSKSSSLYNPIIYVLM. At Lys-296 the chain carries N6-(retinylidene)lysine. Topologically, residues 310 to 355 are cytoplasmic; the sequence is NKQFRNCMITTICCGKNPFGDEDVSSTVSQSKTEVSSVSSSQVSPA.

This sequence belongs to the G-protein coupled receptor 1 family. Opsin subfamily. In terms of processing, phosphorylated on some or all of the serine and threonine residues present in the C-terminal region. In terms of tissue distribution, the color pigments are found in the cone photoreceptor cells.

It is found in the membrane. Visual pigments are the light-absorbing molecules that mediate vision. They consist of an apoprotein, opsin, covalently linked to cis-retinal. This is Green-sensitive opsin (PRA1) from Gallus gallus (Chicken).